The chain runs to 617 residues: Neopullulanase SusA (617 aa).

Residues 1–22 (MKRNLLFIILLLLLPGLHQVFA) form the signal peptide. Ca(2+) is bound by residues Asn-138, Asn-143, Asp-144, Gly-164, and Asp-166. Active-site residues include Asp-331 and Glu-360.

The protein belongs to the glycosyl hydrolase 13 family. It depends on Ca(2+) as a cofactor.

It is found in the periplasm. The catalysed reaction is Hydrolysis of pullulan to panose (6-alpha-D-glucosylmaltose).. It functions in the pathway glycan degradation; starch degradation. Neopullulanase that cleaves 1,4-alpha-glucosidic linkages in starch to produce disaccharides or trisaccharides in starch degradation. In Bacteroides thetaiotaomicron (strain ATCC 29148 / DSM 2079 / JCM 5827 / CCUG 10774 / NCTC 10582 / VPI-5482 / E50), this protein is Neopullulanase SusA (susA).